The sequence spans 34 residues: Sperm protein EM1 (34 aa).

Residues 1-17 are compositionally biased toward basic residues; it reads AGSKSRSRSRSRSRSKS. Positions 1–34 are disordered; the sequence is AGSKSRSRSRSRSRSKSPAKSASPKSAASPRASR. 7 consecutive repeat copies span residues 3–4, 5–6, 7–8, 9–10, 11–12, 13–14, and 15–16. The segment at 3–16 is 7 X 2 AA tandem repeats of S-[KR]; it reads SKSRSRSRSRSRSK. Low complexity predominate over residues 18-34; it reads PAKSASPKSAASPRASR.

As to expression, sperm.

It is found in the nucleus. This Ensis minor (Razor shell) protein is Sperm protein EM1.